The primary structure comprises 216 residues: Octanoyltransferase (216 aa).

A BPL/LPL catalytic domain is found at 35 to 213 (NSNPDFIWIG…IIQEEFNFDF (179 aa)). Residues 77–84 (RGGEVTCH), 144–146 (SIG), and 157–159 (GFS) contribute to the substrate site. The active-site Acyl-thioester intermediate is the Cys175.

This sequence belongs to the LipB family.

It localises to the cytoplasm. The enzyme catalyses octanoyl-[ACP] + L-lysyl-[protein] = N(6)-octanoyl-L-lysyl-[protein] + holo-[ACP] + H(+). Its pathway is protein modification; protein lipoylation via endogenous pathway; protein N(6)-(lipoyl)lysine from octanoyl-[acyl-carrier-protein]: step 1/2. Its function is as follows. Catalyzes the transfer of endogenously produced octanoic acid from octanoyl-acyl-carrier-protein onto the lipoyl domains of lipoate-dependent enzymes. Lipoyl-ACP can also act as a substrate although octanoyl-ACP is likely to be the physiological substrate. This is Octanoyltransferase from Prochlorococcus marinus (strain MIT 9312).